The primary structure comprises 283 residues: Cell differentiation protein rcd1 (283 aa).

It belongs to the CNOT9 family.

Its function is as follows. A differentiation-controlling factor that is essential for the onset of sexual development. Induces ste11 when sexual development is invoked through nitrogen starvation. The polypeptide is Cell differentiation protein rcd1 (rcd1) (Schizosaccharomyces pombe (strain 972 / ATCC 24843) (Fission yeast)).